Consider the following 445-residue polypeptide: Phosphatidate cytidylyltransferase 2 (445 aa).

A compositionally biased stretch (basic and acidic residues) spans 1-39 (MTELRQRVAREPEAPPEDKESESEAKADGETASDSESRV). The segment at 1–52 (MTELRQRVAREPEAPPEDKESESEAKADGETASDSESRVEAVTQPPSADDTP) is disordered. Position 21 is a phosphoserine (Ser-21). Phosphothreonine is present on Thr-31. A phosphoserine mark is found at Ser-33, Ser-35, and Ser-37. Residue Thr-51 is modified to Phosphothreonine. The next 6 helical transmembrane spans lie at 79–99 (MIAF…MIVM), 132–152 (FLLC…FFTL), 166–186 (HRFI…LSLV), 213–233 (LVIH…SCVI), 262–282 (GFIG…YVMS), and 340–360 (IALS…ASGF).

The protein belongs to the CDS family. In terms of assembly, homodimer.

The protein resides in the endoplasmic reticulum membrane. The enzyme catalyses a 1,2-diacyl-sn-glycero-3-phosphate + CTP + H(+) = a CDP-1,2-diacyl-sn-glycerol + diphosphate. The catalysed reaction is 1-octadecanoyl-2-(5Z,8Z,11Z,14Z-eicosatetraenoyl)-sn-glycero-3-phosphate + CTP + H(+) = 1-octadecanoyl-2-(5Z,8Z,11Z,14Z-eicosatetraenoyl)-sn-glycero-3-cytidine-5'-diphosphate + diphosphate. It catalyses the reaction 1-octadecanoyl-2-(9Z,12Z-octadecadienoyl)-sn-glycero-3-phosphate + CTP + H(+) = 1-octadecanoyl-2-(9Z,12Z-octadecadienoyl)-sn-glycero-3-cytidine-5'-diphosphate + diphosphate. It carries out the reaction 1-hexadecanoyl-2-(5Z,8Z,11Z,14Z-eicosatetraenoyl)-sn-glycero-3-phosphate + CTP + H(+) = 1-hexadecanoyl-2-(5Z,8Z,11Z,14Z-eicosatetraenoyl)-sn-glycero-3-cytidine-5'-diphosphate + diphosphate. The enzyme catalyses 1,2-di-(5Z,8Z,11Z,14Z)-eicosatetraenoyl-sn-glycero-3-phosphate + CTP + H(+) = 1,2-di-(5Z,8Z,11Z,14Z-eicosatetraenoyl)-sn-glycero-3-cytidine-5'-diphosphate + diphosphate. The catalysed reaction is 1-octadecanoyl-2-(9Z-octadecenoyl)-sn-glycero-3-phosphate + CTP + H(+) = 1-octadecanoyl-2-(9Z-octadecenoyl)-sn-glycero-3-cytidine-5'-diphosphate + diphosphate. It catalyses the reaction 1-octadecanoyl-2-(4Z,7Z,10Z,13Z,16Z,19Z-docosahexaenoyl)-sn-glycero-3-phosphate + CTP + H(+) = 1-octadecanoyl-2-(4Z,7Z,10Z,13Z,16Z,19Z-docosahexaenoyl)-sn-glycero-3-cytidine-5'-diphosphate + diphosphate. It carries out the reaction 1,2-di-(9Z,12Z-octadecadienoyl)-sn-glycero-3-phosphate + CTP + H(+) = 1,2-di-(9Z,12Z-octadecadienoyl)-sn-glycero-3-cytidine-5'-diphosphate + diphosphate. The enzyme catalyses 1,2-di-(9Z-octadecenoyl)-sn-glycero-3-phosphate + CTP + H(+) = 1,2-di-(9Z-octadecenoyl)-sn-glycero-3-cytidine-5'-diphosphate + diphosphate. The protein operates within phospholipid metabolism; CDP-diacylglycerol biosynthesis; CDP-diacylglycerol from sn-glycerol 3-phosphate: step 3/3. In terms of biological role, catalyzes the conversion of phosphatidic acid (PA) to CDP-diacylglycerol (CDP-DAG), an essential intermediate in the synthesis of phosphatidylglycerol, cardiolipin and phosphatidylinositol. Exhibits specificity for the nature of the acyl chains at the sn-1 and sn-2 positions in the substrate, PA and the preferred acyl chain composition is 1-stearoyl-2-arachidonoyl-sn-phosphatidic acid. Plays an important role in regulating the growth and maturation of lipid droplets which are storage organelles at the center of lipid and energy homeostasis. The chain is Phosphatidate cytidylyltransferase 2 (CDS2) from Bos taurus (Bovine).